The sequence spans 136 residues: Alpha-2-purothionin (136 aa).

Residues 1–27 (MGSKGLKGVMVCLLILGLVLEQVQVEG) form the signal peptide. Disulfide bonds link cysteine 30–cysteine 66, cysteine 31–cysteine 58, cysteine 39–cysteine 56, and cysteine 43–cysteine 52. A propeptide spans 73–136 (LALESNSDEP…GDAGLTSLDA (64 aa)) (acidic domain).

Belongs to the plant thionin (TC 1.C.44) family. 4 C-C subfamily.

The protein resides in the secreted. Thionins are small plant proteins which are toxic to animal cells. They seem to exert their toxic effect at the level of the cell membrane. Their precise function is not known. The protein is Alpha-2-purothionin (THI1.2) of Triticum aestivum (Wheat).